We begin with the raw amino-acid sequence, 127 residues long: MAKQSLDVSSDRRKARKAYFTAPSSERRVLLSAPLSKELRAQYGIKALPIRRDDEVLVVRGSKKGQEGKISSVYRLKFAVQVDKVTKEKVNGASVPINLHPSKLVITKLHLDKDRKALIQRKGGKLE.

This sequence belongs to the universal ribosomal protein uL24 family. As to quaternary structure, component of the large ribosomal subunit (LSU). Mature yeast ribosomes consist of a small (40S) and a large (60S) subunit. The 40S small subunit contains 1 molecule of ribosomal RNA (18S rRNA) and 33 different proteins (encoded by 57 genes). The large 60S subunit contains 3 rRNA molecules (25S, 5.8S and 5S rRNA) and 46 different proteins (encoded by 81 genes).

The protein localises to the cytoplasm. Its function is as follows. Component of the ribosome, a large ribonucleoprotein complex responsible for the synthesis of proteins in the cell. The small ribosomal subunit (SSU) binds messenger RNAs (mRNAs) and translates the encoded message by selecting cognate aminoacyl-transfer RNA (tRNA) molecules. The large subunit (LSU) contains the ribosomal catalytic site termed the peptidyl transferase center (PTC), which catalyzes the formation of peptide bonds, thereby polymerizing the amino acids delivered by tRNAs into a polypeptide chain. The nascent polypeptides leave the ribosome through a tunnel in the LSU and interact with protein factors that function in enzymatic processing, targeting, and the membrane insertion of nascent chains at the exit of the ribosomal tunnel. This Saccharomyces cerevisiae (strain ATCC 204508 / S288c) (Baker's yeast) protein is Large ribosomal subunit protein uL24B.